The primary structure comprises 422 residues: 26S proteasome non-ATPase regulatory subunit 11 (422 aa).

A2 is subject to N-acetylalanine. Phosphoserine is present on residues S14 and S23. A PCI domain is found at 224 to 392 (DWKTAYSYFY…GVLIIFDEPP (169 aa)). A Glycyl lysine isopeptide (Lys-Gly) (interchain with G-Cter in SUMO2) cross-link involves residue K274.

It belongs to the proteasome subunit S9 family. Component of the 19S proteasome regulatory particle complex. The 26S proteasome consists of a 20S core particle (CP) and two 19S regulatory subunits (RP). The regulatory particle is made of a lid composed of 9 subunits including PSMD11, a base containing 6 ATPases and few additional components. Phosphorylated by AMPK.

Its subcellular location is the nucleus. It is found in the cytoplasm. The protein localises to the cytosol. In terms of biological role, component of the 26S proteasome, a multiprotein complex involved in the ATP-dependent degradation of ubiquitinated proteins. This complex plays a key role in the maintenance of protein homeostasis by removing misfolded or damaged proteins, which could impair cellular functions, and by removing proteins whose functions are no longer required. Therefore, the proteasome participates in numerous cellular processes, including cell cycle progression, apoptosis, or DNA damage repair. In the complex, PSMD11 is required for proteasome assembly. Plays a key role in increased proteasome activity in embryonic stem cells (ESCs): its high expression in ESCs promotes enhanced assembly of the 26S proteasome, followed by higher proteasome activity. The sequence is that of 26S proteasome non-ATPase regulatory subunit 11 (PSMD11) from Bos taurus (Bovine).